Reading from the N-terminus, the 365-residue chain is Flagellar P-ring protein (365 aa).

The signal sequence occupies residues 1–19; sequence MIKFLSTFMLLLVTTVVQA.

It belongs to the FlgI family. The basal body constitutes a major portion of the flagellar organelle and consists of four rings (L,P,S, and M) mounted on a central rod.

The protein localises to the periplasm. Its subcellular location is the bacterial flagellum basal body. Its function is as follows. Assembles around the rod to form the L-ring and probably protects the motor/basal body from shearing forces during rotation. The protein is Flagellar P-ring protein of Escherichia fergusonii (strain ATCC 35469 / DSM 13698 / CCUG 18766 / IAM 14443 / JCM 21226 / LMG 7866 / NBRC 102419 / NCTC 12128 / CDC 0568-73).